Reading from the N-terminus, the 54-residue chain is ATP synthase protein 8 (54 aa).

Residues 9 to 29 form a helical membrane-spanning segment; sequence WIINFFIVWTADFTLLIVLSI.

It belongs to the ATPase protein 8 family. As to quaternary structure, F-type ATPases have 2 components, CF(1) - the catalytic core - and CF(0) - the membrane proton channel.

It localises to the mitochondrion membrane. Functionally, mitochondrial membrane ATP synthase (F(1)F(0) ATP synthase or Complex V) produces ATP from ADP in the presence of a proton gradient across the membrane which is generated by electron transport complexes of the respiratory chain. F-type ATPases consist of two structural domains, F(1) - containing the extramembraneous catalytic core and F(0) - containing the membrane proton channel, linked together by a central stalk and a peripheral stalk. During catalysis, ATP synthesis in the catalytic domain of F(1) is coupled via a rotary mechanism of the central stalk subunits to proton translocation. Part of the complex F(0) domain. Minor subunit located with subunit a in the membrane. The chain is ATP synthase protein 8 (MT-ATP8) from Arbacia lixula (Black urchin).